A 142-amino-acid chain; its full sequence is Hemoglobin subunit alpha-A (142 aa).

The region spanning 2-142 (VLSAADKTNV…VGAVLTAKYR (141 aa)) is the Globin domain. An O2-binding site is contributed by His-59. Heme b is bound at residue His-88.

Belongs to the globin family. In terms of assembly, heterotetramer of two alpha chains and two beta chains. In terms of tissue distribution, red blood cells.

Functionally, involved in oxygen transport from the lung to the various peripheral tissues. The sequence is that of Hemoglobin subunit alpha-A (HBAA) from Cairina moschata (Muscovy duck).